Reading from the N-terminus, the 90-residue chain is Probable Fe(2+)-trafficking protein (90 aa).

It belongs to the Fe(2+)-trafficking protein family.

Its function is as follows. Could be a mediator in iron transactions between iron acquisition and iron-requiring processes, such as synthesis and/or repair of Fe-S clusters in biosynthetic enzymes. The polypeptide is Probable Fe(2+)-trafficking protein (Pasteurella multocida (strain Pm70)).